The chain runs to 231 residues: Phosphoheptose isomerase (231 aa).

Positions 35-190 (LAAVLGGGGR…CAAFDAALER (156 aa)) constitute an SIS domain. Residue 50–52 (NGG) participates in substrate binding. Residues His59 and Glu63 each contribute to the Zn(2+) site. Residues Glu63, 92 to 93 (ND), 118 to 120 (STS), Ser123, and Gln170 contribute to the substrate site. 2 residues coordinate Zn(2+): Gln170 and His178. Composition is skewed to low complexity over residues 197 to 206 (AAGSAASTGR) and 214 to 225 (ASTGRAAGAGRA). Residues 197–231 (AAGSAASTGRAARRERAASTGRAAGAGRAAQRKRR) form a disordered region.

The protein belongs to the SIS family. GmhA subfamily. Requires Zn(2+) as cofactor.

Its subcellular location is the cytoplasm. The enzyme catalyses 2 D-sedoheptulose 7-phosphate = D-glycero-alpha-D-manno-heptose 7-phosphate + D-glycero-beta-D-manno-heptose 7-phosphate. It participates in carbohydrate biosynthesis; D-glycero-D-manno-heptose 7-phosphate biosynthesis; D-glycero-alpha-D-manno-heptose 7-phosphate and D-glycero-beta-D-manno-heptose 7-phosphate from sedoheptulose 7-phosphate: step 1/1. Functionally, catalyzes the isomerization of sedoheptulose 7-phosphate in D-glycero-D-manno-heptose 7-phosphate. The polypeptide is Phosphoheptose isomerase (Streptomyces coelicolor (strain ATCC BAA-471 / A3(2) / M145)).